Here is a 502-residue protein sequence, read N- to C-terminus: CBL-interacting serine/threonine-protein kinase 13 (502 aa).

A disordered region spans residues 32–51 (TNKETSTPESPRSPRTPQGS). The segment covering 35 to 48 (ETSTPESPRSPRTP) has biased composition (low complexity). Residues 57 to 311 (YEIGKLLGHG…IPEIMKHRWF (255 aa)) enclose the Protein kinase domain. Residues 63 to 71 (LGHGSFAKV) and lysine 86 each bind ATP. The Proton acceptor role is filled by aspartate 179. An activation loop region spans residues 197-226 (DFGLSVVSEQLKQEGICQTFCGTPAYLAPE). Serine 201 bears the Phosphoserine mark. A Phosphothreonine modification is found at threonine 215. The disordered stretch occupies residues 331–359 (DDDNDDDDSSSLSSGRSSTASEGDAEFDI). The span at 340 to 352 (SSLSSGRSSTASE) shows a compositional bias: low complexity. The NAF domain maps to 366 to 387 (PRPASLNAFDILSFSDLSGLFE). The segment at 390-419 (GQGARFVSAAPMTKIISKLEEIAKEVKFMV) is PPI.

Belongs to the protein kinase superfamily. CAMK Ser/Thr protein kinase family. SNF1 subfamily. Interacts with CBL2 and CBL3. The cofactor is Mn(2+).

It catalyses the reaction L-seryl-[protein] + ATP = O-phospho-L-seryl-[protein] + ADP + H(+). The enzyme catalyses L-threonyl-[protein] + ATP = O-phospho-L-threonyl-[protein] + ADP + H(+). CIPK serine-threonine protein kinases interact with CBL proteins. Binding of a CBL protein to the regulatory NAF domain of CIPK protein lead to the activation of the kinase in a calcium-dependent manner. This chain is CBL-interacting serine/threonine-protein kinase 13 (CIPK13), found in Arabidopsis thaliana (Mouse-ear cress).